The primary structure comprises 434 residues: Adenylosuccinate synthetase (434 aa).

Residues 25–31 (GDEGKGK) and 53–55 (GHT) each bind GTP. Asp-26 serves as the catalytic Proton acceptor. Asp-26 and Gly-53 together coordinate Mg(2+). IMP contacts are provided by residues 26–29 (DEGK), 51–54 (NAGH), Thr-142, Arg-156, Asn-233, Thr-248, and Arg-312. The active-site Proton donor is His-54. 308-314 (VTTGRKR) lines the substrate pocket. GTP contacts are provided by residues Arg-314, 340–342 (KLD), and 422–424 (GVG).

Belongs to the adenylosuccinate synthetase family. In terms of assembly, homodimer. Requires Mg(2+) as cofactor.

It localises to the cytoplasm. It carries out the reaction IMP + L-aspartate + GTP = N(6)-(1,2-dicarboxyethyl)-AMP + GDP + phosphate + 2 H(+). The protein operates within purine metabolism; AMP biosynthesis via de novo pathway; AMP from IMP: step 1/2. Competitively Inhibited by GMP. Allosterically inhibited by AMP. Plays an important role in the de novo pathway and in the salvage pathway of purine nucleotide biosynthesis. Catalyzes the first committed step in the biosynthesis of AMP from IMP. This Schizosaccharomyces pombe (strain 972 / ATCC 24843) (Fission yeast) protein is Adenylosuccinate synthetase (ade2).